The primary structure comprises 162 residues: ATP synthase subunit b (162 aa).

Residues 10–29 (LIWTIINFAVLLWGMHRFLY) form a helical membrane-spanning segment.

The protein belongs to the ATPase B chain family. As to quaternary structure, F-type ATPases have 2 components, F(1) - the catalytic core - and F(0) - the membrane proton channel. F(1) has five subunits: alpha(3), beta(3), gamma(1), delta(1), epsilon(1). F(0) has three main subunits: a(1), b(2) and c(10-14). The alpha and beta chains form an alternating ring which encloses part of the gamma chain. F(1) is attached to F(0) by a central stalk formed by the gamma and epsilon chains, while a peripheral stalk is formed by the delta and b chains.

The protein resides in the cell membrane. In terms of biological role, f(1)F(0) ATP synthase produces ATP from ADP in the presence of a proton or sodium gradient. F-type ATPases consist of two structural domains, F(1) containing the extramembraneous catalytic core and F(0) containing the membrane proton channel, linked together by a central stalk and a peripheral stalk. During catalysis, ATP synthesis in the catalytic domain of F(1) is coupled via a rotary mechanism of the central stalk subunits to proton translocation. Component of the F(0) channel, it forms part of the peripheral stalk, linking F(1) to F(0). The polypeptide is ATP synthase subunit b (Symbiobacterium thermophilum (strain DSM 24528 / JCM 14929 / IAM 14863 / T)).